Consider the following 266-residue polypeptide: Putative carbamate hydrolase RutD (266 aa).

It belongs to the AB hydrolase superfamily. Hydrolase RutD family.

It catalyses the reaction carbamate + 2 H(+) = NH4(+) + CO2. In terms of biological role, involved in pyrimidine catabolism. May facilitate the hydrolysis of carbamate, a reaction that can also occur spontaneously. The chain is Putative carbamate hydrolase RutD from Escherichia coli O150:H5 (strain SE15).